The chain runs to 337 residues: Transcription initiation factor IIB (337 aa).

The TFIIB-type zinc finger occupies E37–D68. Zn(2+)-binding residues include C41, C44, C60, and C63. 2 repeat units span residues S154–L237 and D248–E329.

This sequence belongs to the TFIIB family.

Stabilizes TBP binding to an archaeal box-A promoter. Also responsible for recruiting RNA polymerase II to the pre-initiation complex (DNA-TBP-TFIIB). The chain is Transcription initiation factor IIB from Methanosarcina mazei (Methanosarcina frisia).